Reading from the N-terminus, the 140-residue chain is TPT1-like protein (140 aa).

Residues 6 to 140 (MITYWDLISH…LANFKNYQKT (135 aa)) form the TCTP domain.

This sequence belongs to the TCTP family.

The polypeptide is TPT1-like protein (Homo sapiens (Human)).